The following is a 427-amino-acid chain: Serine--tRNA ligase (427 aa).

L-serine is bound at residue Thr-233–Glu-235. Arg-264–Glu-266 lines the ATP pocket. Glu-287 serves as a coordination point for L-serine. Glu-351–Ser-354 serves as a coordination point for ATP. Residue Ser-386 participates in L-serine binding.

The protein belongs to the class-II aminoacyl-tRNA synthetase family. Type-1 seryl-tRNA synthetase subfamily. Homodimer. The tRNA molecule binds across the dimer.

The protein localises to the cytoplasm. It carries out the reaction tRNA(Ser) + L-serine + ATP = L-seryl-tRNA(Ser) + AMP + diphosphate + H(+). It catalyses the reaction tRNA(Sec) + L-serine + ATP = L-seryl-tRNA(Sec) + AMP + diphosphate + H(+). Its pathway is aminoacyl-tRNA biosynthesis; selenocysteinyl-tRNA(Sec) biosynthesis; L-seryl-tRNA(Sec) from L-serine and tRNA(Sec): step 1/1. Functionally, catalyzes the attachment of serine to tRNA(Ser). Is also able to aminoacylate tRNA(Sec) with serine, to form the misacylated tRNA L-seryl-tRNA(Sec), which will be further converted into selenocysteinyl-tRNA(Sec). This Dechloromonas aromatica (strain RCB) protein is Serine--tRNA ligase.